The following is a 279-amino-acid chain: Probable endonuclease 4 (279 aa).

Residues His69, His109, Glu145, Asp179, His182, His216, Asp229, His231, and Glu261 each contribute to the Zn(2+) site.

It belongs to the AP endonuclease 2 family. It depends on Zn(2+) as a cofactor.

It catalyses the reaction Endonucleolytic cleavage to 5'-phosphooligonucleotide end-products.. Its function is as follows. Endonuclease IV plays a role in DNA repair. It cleaves phosphodiester bonds at apurinic or apyrimidinic (AP) sites, generating a 3'-hydroxyl group and a 5'-terminal sugar phosphate. This chain is Probable endonuclease 4, found in Desulforapulum autotrophicum (strain ATCC 43914 / DSM 3382 / VKM B-1955 / HRM2) (Desulfobacterium autotrophicum).